A 397-amino-acid polypeptide reads, in one-letter code: Inositol 3-kinase (397 aa).

ATP contacts are provided by residues S228, 278 to 281 (GAGD), and N305. D281 functions as the Proton acceptor in the catalytic mechanism.

The protein belongs to the carbohydrate kinase pfkB family. In terms of tissue distribution, expressed in roots, leaf blade shoots, leaf sheath shoots and panicles.

The enzyme catalyses myo-inositol + ATP = 1D-myo-inositol 3-phosphate + ADP + H(+). Functionally, kinase that phosphorylates myo-inositol to produce multiple myo-inositol monophosphates. Participates in phytic acid biosynthesis in developing seeds. Phytic acid is the primary storage form of phosphorus in cereal grains and other plant seeds. This Oryza sativa subsp. japonica (Rice) protein is Inositol 3-kinase.